We begin with the raw amino-acid sequence, 239 residues long: MIAFSLLCFAAVLQQSFGNVDFNSESTRRKKKQKEIVDLHNSLRRRVSPTASNMLKMEWYPEAASNAERWANTCSLNHSPDNLRVLEGIQCGESIYMSSNARTWTEIIHLWHDEYKNFVYGVGANPPGSVTGHYTQIVWYQTYRAGCAVSYCPSSAWSYFYVCQYCPSGNFQGKTATPYKLGPPCGDCPSACDNGLCTNPCTIYNKLTNCDSLLKQSSCQDDWIKSNCPASCFCRNKII.

An N-terminal signal peptide occupies residues 1–18 (MIAFSLLCFAAVLQQSFG). Residues 37-165 (VDLHNSLRRR…AWSYFYVCQY (129 aa)) form the SCP domain. Cystine bridges form between cysteine 74-cysteine 152, cysteine 91-cysteine 166, cysteine 147-cysteine 163, cysteine 185-cysteine 192, cysteine 188-cysteine 197, cysteine 201-cysteine 234, cysteine 210-cysteine 228, and cysteine 219-cysteine 232. The region spanning 201–234 (CTIYNKLTNCDSLLKQSSCQDDWIKSNCPASCFC) is the ShKT domain.

As to expression, expressed by the venom gland.

It is found in the secreted. Inhibits calcium-activated potassium channels (KCa1.1/KCNMA1), voltage-gated potassium channel Kv1.3/KCNA3, and the calcium release channel/ryanodine receptor (RyR). Binds specifically to type 1 RyR (RyR1) from skeletal muscle. Inhibit both the binding of ryanodine to RyR1, and RyR1's calcium-channel activity. Inhibits carbachol-induced muscle contraction and weakly blocks muscle contraction evoked by potassium. The chain is Cysteine-rich venom protein natrin-1 from Naja atra (Chinese cobra).